A 211-amino-acid chain; its full sequence is ATP phosphoribosyltransferase (211 aa).

The protein belongs to the ATP phosphoribosyltransferase family. Short subfamily. In terms of assembly, heteromultimer composed of HisG and HisZ subunits.

It is found in the cytoplasm. The catalysed reaction is 1-(5-phospho-beta-D-ribosyl)-ATP + diphosphate = 5-phospho-alpha-D-ribose 1-diphosphate + ATP. It functions in the pathway amino-acid biosynthesis; L-histidine biosynthesis; L-histidine from 5-phospho-alpha-D-ribose 1-diphosphate: step 1/9. In terms of biological role, catalyzes the condensation of ATP and 5-phosphoribose 1-diphosphate to form N'-(5'-phosphoribosyl)-ATP (PR-ATP). Has a crucial role in the pathway because the rate of histidine biosynthesis seems to be controlled primarily by regulation of HisG enzymatic activity. This Pseudomonas savastanoi pv. phaseolicola (strain 1448A / Race 6) (Pseudomonas syringae pv. phaseolicola (strain 1448A / Race 6)) protein is ATP phosphoribosyltransferase.